Here is a 369-residue protein sequence, read N- to C-terminus: Beta-1,4-galactosyltransferase 2 (369 aa).

The Cytoplasmic segment spans residues Met1–Ala15. A helical; Signal-anchor for type II membrane protein membrane pass occupies residues Val16–Ala36. At Gln37 to Gly369 the chain is on the lumenal side. The segment covering Ala58–Ser73 has biased composition (polar residues). Residues Ala58–Val90 form a disordered region. Asn63 and Asn68 each carry an N-linked (GlcNAc...) asparagine glycan. Cys94 and Cys136 are joined by a disulfide. UDP-alpha-D-galactose contacts are provided by residues Pro147–Arg151, Phe186–Arg188, Val214–Asp215, and Trp275. Cys208 and Cys227 are disulfide-bonded. Asp215 contacts Mn(2+). N-acetyl-D-glucosamine is bound at residue Gly277–Asp280. His308 contacts Mn(2+). UDP-alpha-D-galactose is bound at residue His308 to Arg310. Residue Arg320 participates in N-acetyl-D-glucosamine binding. An N-linked (GlcNAc...) asparagine glycan is attached at Asn354.

The protein belongs to the glycosyltransferase 7 family. Mn(2+) serves as cofactor.

It localises to the golgi apparatus. The protein resides in the golgi stack membrane. It carries out the reaction D-glucose + UDP-alpha-D-galactose = lactose + UDP + H(+). It catalyses the reaction an N-acetyl-beta-D-glucosaminyl derivative + UDP-alpha-D-galactose = a beta-D-galactosyl-(1-&gt;4)-N-acetyl-beta-D-glucosaminyl derivative + UDP + H(+). The catalysed reaction is N-acetyl-D-glucosamine + UDP-alpha-D-galactose = beta-D-galactosyl-(1-&gt;4)-N-acetyl-D-glucosamine + UDP + H(+). Its pathway is protein modification; protein glycosylation. In terms of biological role, responsible for the synthesis of complex-type N-linked oligosaccharides in many glycoproteins as well as the carbohydrate moieties of glycolipids. Can produce lactose. This chain is Beta-1,4-galactosyltransferase 2, found in Mus musculus (Mouse).